Reading from the N-terminus, the 411-residue chain is LL-diaminopimelate aminotransferase (411 aa).

The substrate site is built by tyrosine 15 and glycine 42. Pyridoxal 5'-phosphate is bound by residues tyrosine 72, 108–109, tyrosine 132, asparagine 187, tyrosine 218, and 246–248; these read SK and SFS. Lysine 109, tyrosine 132, and asparagine 187 together coordinate substrate. Lysine 249 carries the N6-(pyridoxal phosphate)lysine modification. Positions 257 and 292 each coordinate pyridoxal 5'-phosphate. The substrate site is built by asparagine 292 and arginine 388.

This sequence belongs to the class-I pyridoxal-phosphate-dependent aminotransferase family. LL-diaminopimelate aminotransferase subfamily. In terms of assembly, homodimer. The cofactor is pyridoxal 5'-phosphate.

It catalyses the reaction (2S,6S)-2,6-diaminopimelate + 2-oxoglutarate = (S)-2,3,4,5-tetrahydrodipicolinate + L-glutamate + H2O + H(+). Its pathway is amino-acid biosynthesis; L-lysine biosynthesis via DAP pathway; LL-2,6-diaminopimelate from (S)-tetrahydrodipicolinate (aminotransferase route): step 1/1. Involved in the synthesis of meso-diaminopimelate (m-DAP or DL-DAP), required for both lysine and peptidoglycan biosynthesis. Catalyzes the direct conversion of tetrahydrodipicolinate to LL-diaminopimelate. This is LL-diaminopimelate aminotransferase from Geobacter sp. (strain M21).